A 604-amino-acid polypeptide reads, in one-letter code: Glutamyl-tRNA(Gln) amidotransferase subunit B, mitochondrial (604 aa).

The transit peptide at 1–48 directs the protein to the mitochondrion; that stretch reads MIRQCLSRRGAYSRYRLAARGVELAEPFHHQSSRPQGRRNWSSSPRCS. A disordered region spans residues 28 to 57; sequence FHHQSSRPQGRRNWSSSPRCSLDIRTDTPR. Polar residues predominate over residues 33–46; sequence SRPQGRRNWSSSPR.

It belongs to the GatB/GatE family. GatB subfamily. As to quaternary structure, subunit of the heterotrimeric GatCAB amidotransferase (AdT) complex, composed of A, B and C subunits.

It is found in the mitochondrion. It catalyses the reaction L-glutamyl-tRNA(Gln) + L-glutamine + ATP + H2O = L-glutaminyl-tRNA(Gln) + L-glutamate + ADP + phosphate + H(+). Its function is as follows. Allows the formation of correctly charged Gln-tRNA(Gln) through the transamidation of misacylated Glu-tRNA(Gln) in the mitochondria. The reaction takes place in the presence of glutamine and ATP through an activated gamma-phospho-Glu-tRNA(Gln). The protein is Glutamyl-tRNA(Gln) amidotransferase subunit B, mitochondrial of Blastomyces gilchristii (strain SLH14081) (Blastomyces dermatitidis).